We begin with the raw amino-acid sequence, 243 residues long: uncharacterized protein (243 aa).

The first 16 residues, 1 to 16 (MKLLALVALCAVGVAS), serve as a signal peptide directing secretion. Asn55 carries an N-linked (GlcNAc...) asparagine glycan. Disordered regions lie at residues 95 to 126 (SQGRNQQQQSNDVSSQGGNDDGSIPKAPEKPS) and 208 to 235 (NQQQQRQQPSSTTPASTSSTTLPPKPTV). 2 stretches are compositionally biased toward low complexity: residues 99 to 112 (NQQQQSNDVSSQGG) and 209 to 229 (QQQQRQQPSSTTPASTSSTTL). Cys141 and Cys239 are disulfide-bonded.

This sequence belongs to the protease inhibitor I33 family.

It localises to the secreted. This is an uncharacterized protein from Caenorhabditis elegans.